We begin with the raw amino-acid sequence, 334 residues long: Glycerol-1-phosphate dehydrogenase [NAD(P)+] (334 aa).

Residues 77-81 (GRPID) and 99-102 (TTAS) each bind NAD(+). Substrate is bound at residue aspartate 104. Residue serine 108 participates in NAD(+) binding. Substrate is bound at residue aspartate 147. Aspartate 147 and histidine 225 together coordinate Zn(2+). Histidine 229 is a substrate binding site. Histidine 246 serves as a coordination point for Zn(2+).

It belongs to the glycerol-1-phosphate dehydrogenase family. Zn(2+) serves as cofactor.

It is found in the cytoplasm. The enzyme catalyses sn-glycerol 1-phosphate + NAD(+) = dihydroxyacetone phosphate + NADH + H(+). It carries out the reaction sn-glycerol 1-phosphate + NADP(+) = dihydroxyacetone phosphate + NADPH + H(+). It participates in membrane lipid metabolism; glycerophospholipid metabolism. Its function is as follows. Catalyzes the NAD(P)H-dependent reduction of dihydroxyacetonephosphate (DHAP or glycerone phosphate) to glycerol 1-phosphate (G1P). The G1P thus generated is used as the glycerophosphate backbone of phospholipids in the cellular membranes of Archaea. This chain is Glycerol-1-phosphate dehydrogenase [NAD(P)+], found in Methanococcus maripaludis (strain C7 / ATCC BAA-1331).